We begin with the raw amino-acid sequence, 101 residues long: ATP synthase subunit c (101 aa).

2 helical membrane passes run 28 to 48 (SVVAAGVGLGLAALGGAVGMG) and 72 to 92 (MFIALAMIEAQVIYTLVIALI).

The protein belongs to the ATPase C chain family. In terms of assembly, F-type ATPases have 2 components, F(1) - the catalytic core - and F(0) - the membrane proton channel. F(1) has five subunits: alpha(3), beta(3), gamma(1), delta(1), epsilon(1). F(0) has three main subunits: a(1), b(2) and c(10-14). The alpha and beta chains form an alternating ring which encloses part of the gamma chain. F(1) is attached to F(0) by a central stalk formed by the gamma and epsilon chains, while a peripheral stalk is formed by the delta and b chains.

Its subcellular location is the cell inner membrane. F(1)F(0) ATP synthase produces ATP from ADP in the presence of a proton or sodium gradient. F-type ATPases consist of two structural domains, F(1) containing the extramembraneous catalytic core and F(0) containing the membrane proton channel, linked together by a central stalk and a peripheral stalk. During catalysis, ATP synthesis in the catalytic domain of F(1) is coupled via a rotary mechanism of the central stalk subunits to proton translocation. Functionally, key component of the F(0) channel; it plays a direct role in translocation across the membrane. A homomeric c-ring of between 10-14 subunits forms the central stalk rotor element with the F(1) delta and epsilon subunits. This Sulfurovum sp. (strain NBC37-1) protein is ATP synthase subunit c.